A 117-amino-acid polypeptide reads, in one-letter code: Large ribosomal subunit protein uL18 (117 aa).

This sequence belongs to the universal ribosomal protein uL18 family. In terms of assembly, part of the 50S ribosomal subunit; part of the 5S rRNA/L5/L18/L25 subcomplex. Contacts the 5S and 23S rRNAs.

In terms of biological role, this is one of the proteins that bind and probably mediate the attachment of the 5S RNA into the large ribosomal subunit, where it forms part of the central protuberance. The polypeptide is Large ribosomal subunit protein uL18 (Leuconostoc citreum (strain KM20)).